The primary structure comprises 364 residues: Histidinol-phosphate aminotransferase (364 aa).

K226 is subject to N6-(pyridoxal phosphate)lysine.

This sequence belongs to the class-II pyridoxal-phosphate-dependent aminotransferase family. Histidinol-phosphate aminotransferase subfamily. Homodimer. Pyridoxal 5'-phosphate is required as a cofactor.

It carries out the reaction L-histidinol phosphate + 2-oxoglutarate = 3-(imidazol-4-yl)-2-oxopropyl phosphate + L-glutamate. Its pathway is amino-acid biosynthesis; L-histidine biosynthesis; L-histidine from 5-phospho-alpha-D-ribose 1-diphosphate: step 7/9. This chain is Histidinol-phosphate aminotransferase, found in Campylobacter jejuni subsp. jejuni serotype O:23/36 (strain 81-176).